We begin with the raw amino-acid sequence, 203 residues long: Probable Tat proofreading chaperone DmsD (203 aa).

It belongs to the TorD/DmsD family. DmsD subfamily.

Required for biogenesis/assembly of DMSO reductase, but not for the interaction of the DmsA signal peptide with the Tat system. May be part of a chaperone cascade complex that facilitates a folding-maturation pathway for the substrate protein. The sequence is that of Probable Tat proofreading chaperone DmsD from Haemophilus influenzae (strain ATCC 51907 / DSM 11121 / KW20 / Rd).